We begin with the raw amino-acid sequence, 180 residues long: GTP cyclohydrolase 1 (180 aa).

Residues cysteine 71, histidine 74, and cysteine 142 each contribute to the Zn(2+) site.

Belongs to the GTP cyclohydrolase I family. As to quaternary structure, toroid-shaped homodecamer, composed of two pentamers of five dimers.

The enzyme catalyses GTP + H2O = 7,8-dihydroneopterin 3'-triphosphate + formate + H(+). Its pathway is cofactor biosynthesis; 7,8-dihydroneopterin triphosphate biosynthesis; 7,8-dihydroneopterin triphosphate from GTP: step 1/1. The polypeptide is GTP cyclohydrolase 1 (folE) (Helicobacter pylori (strain ATCC 700392 / 26695) (Campylobacter pylori)).